The sequence spans 402 residues: Tyrosine--tRNA ligase (402 aa).

The 'HIGH' region signature appears at 48-57; it reads PTGSDIHLGH. A 'KMSKS' region motif is present at residues 235–239; that stretch reads KMSKS. Position 238 (K238) interacts with ATP. The S4 RNA-binding domain maps to 338 to 402; sequence AKAFYLVSAV…GKKKFVRLVL (65 aa).

This sequence belongs to the class-I aminoacyl-tRNA synthetase family. TyrS type 2 subfamily. As to quaternary structure, homodimer.

The protein localises to the cytoplasm. It carries out the reaction tRNA(Tyr) + L-tyrosine + ATP = L-tyrosyl-tRNA(Tyr) + AMP + diphosphate + H(+). Catalyzes the attachment of tyrosine to tRNA(Tyr) in a two-step reaction: tyrosine is first activated by ATP to form Tyr-AMP and then transferred to the acceptor end of tRNA(Tyr). The polypeptide is Tyrosine--tRNA ligase (Synechococcus elongatus (strain ATCC 33912 / PCC 7942 / FACHB-805) (Anacystis nidulans R2)).